Reading from the N-terminus, the 363-residue chain is Nucleoporin SEH1 (363 aa).

WD repeat units follow at residues 15–54 (AHRD…NWRR), 60–101 (CHGG…SEKD), 108–149 (QWIR…RIYE), 158–206 (RWNL…VIYE), 223–264 (DLPC…SAIL), and 287–326 (GDHR…QWVK).

The protein belongs to the WD repeat SEC13 family. In terms of assembly, component of the nuclear pore complex (NPC). Probably part of the GATOR complex.

It localises to the nucleus. The protein resides in the nuclear pore complex. The protein localises to the lysosome membrane. It is found in the nucleus envelope. In terms of biological role, probable component of the nuclear pore complex (NPC) which is involved in the trafficking of macromolecules between the cytoplasm and nucleus. Functionally, as a component of the GATOR complex may function in the amino acid-sensing branch of the TORC1 signaling pathway. This chain is Nucleoporin SEH1, found in Caenorhabditis elegans.